The following is a 382-amino-acid chain: Anhydro-N-acetylmuramic acid kinase (382 aa).

Gly-9 to Asp-16 contributes to the ATP binding site.

This sequence belongs to the anhydro-N-acetylmuramic acid kinase family.

The enzyme catalyses 1,6-anhydro-N-acetyl-beta-muramate + ATP + H2O = N-acetyl-D-muramate 6-phosphate + ADP + H(+). The protein operates within amino-sugar metabolism; 1,6-anhydro-N-acetylmuramate degradation. Its pathway is cell wall biogenesis; peptidoglycan recycling. In terms of biological role, catalyzes the specific phosphorylation of 1,6-anhydro-N-acetylmuramic acid (anhMurNAc) with the simultaneous cleavage of the 1,6-anhydro ring, generating MurNAc-6-P. Is required for the utilization of anhMurNAc either imported from the medium or derived from its own cell wall murein, and thus plays a role in cell wall recycling. This is Anhydro-N-acetylmuramic acid kinase from Bacillus cereus (strain G9842).